A 480-amino-acid chain; its full sequence is UDP-N-acetylmuramoylalanine--D-glutamate ligase (480 aa).

Position 127–133 (127–133 (GTNGKTT)) interacts with ATP.

Belongs to the MurCDEF family.

The protein localises to the cytoplasm. The enzyme catalyses UDP-N-acetyl-alpha-D-muramoyl-L-alanine + D-glutamate + ATP = UDP-N-acetyl-alpha-D-muramoyl-L-alanyl-D-glutamate + ADP + phosphate + H(+). Its pathway is cell wall biogenesis; peptidoglycan biosynthesis. Cell wall formation. Catalyzes the addition of glutamate to the nucleotide precursor UDP-N-acetylmuramoyl-L-alanine (UMA). This chain is UDP-N-acetylmuramoylalanine--D-glutamate ligase, found in Tropheryma whipplei (strain TW08/27) (Whipple's bacillus).